A 352-amino-acid chain; its full sequence is MVFRIASSPYTHNQRQTSRIMLLVLLAAVPGIAAQLWFFGWGTLVQILLASVSALLAEALVLKLRKQSVAATLKDNSALLTGLLLAVSIPPLAPWWMVVLGTVFAVIIAKQLYGGLGQNPFNPAMIGYVVLLISFPVQMTSWLPPHEIAVNIPGFIDAIQVIFSGHTTSGGDMNTLRLGIDGISQATPLDTFKTSVRAGHSVEEIMQYPIYSGILAGAGWQWVNLAWLAGGVWLLWQKAIRWHVPLSFLVTLALCATLGWLFSPDTLAAPQIHLLSGATMLGAFFILTDPVTASTTNRGRLIFGALAGLLVWMIRSFGGYPDGVAFAVLLANITVPLIDYYTRPRVYGHRKG.

A run of 4 helical transmembrane segments spans residues 20-40 (IMLL…WFFG), 42-62 (GTLV…ALVL), 89-109 (IPPL…VIIA), and 123-143 (PAMI…TSWL). Residue T187 is modified to FMN phosphoryl threonine. 5 helical membrane-spanning segments follow: residues 214–234 (ILAG…GVWL), 242–262 (WHVP…GWLF), 267–287 (LAAP…FFIL), 301–321 (LIFG…GGYP), and 322–342 (DGVA…DYYT).

The protein belongs to the NqrB/RnfD family. The complex is composed of six subunits: RsxA, RsxB, RsxC, RsxD, RsxE and RsxG. The cofactor is FMN.

It localises to the cell inner membrane. Functionally, part of a membrane-bound complex that couples electron transfer with translocation of ions across the membrane. Required to maintain the reduced state of SoxR. The protein is Ion-translocating oxidoreductase complex subunit D of Escherichia coli (strain UTI89 / UPEC).